Consider the following 743-residue polypeptide: Zinc transporter ZIP6 (743 aa).

Positions 1–20 (MARKLSVILILTFALSVTNP) are cleaved as a signal peptide. Over 21–313 (LHELKAAAFP…PKTYSLQIAW (293 aa)) the chain is Extracellular. A glycan (N-linked (GlcNAc...) asparagine) is linked at N67. Over residues 96–116 (HEHHSDHEHHSDHEHHSDHEH) the composition is skewed to basic and acidic residues. Disordered regions lie at residues 96–174 (HEHH…SASE) and 190–245 (LETI…SRNT). A compositionally biased stretch (basic residues) spans 117-132 (HSHRNHAASGKNKRKA). 2 stretches are compositionally biased toward basic and acidic residues: residues 133–147 (LCPD…KDPR) and 155–167 (HRSE…RNVK). Positions 206-215 (VSSSTPPSVT) are enriched in polar residues. The span at 227 to 237 (KTNESVSEPRK) shows a compositional bias: basic and acidic residues. N229, N254, and N271 each carry an N-linked (GlcNAc...) asparagine glycan. The helical transmembrane segment at 314–334 (VGGFIAISIISFLSLLGVILV) threads the bilayer. The Cytoplasmic portion of the chain corresponds to 335–343 (PLMNRVFFK). The chain crosses the membrane as a helical span at residues 344–364 (FLLSFLVALAVGTLSGDAFLH). Topologically, residues 365 to 411 (LLPHSHASHHHSHSHEEPAMEMKRGPLFSHLSSQNIEESAYFDSTWK) are extracellular. A helical membrane pass occupies residues 412–432 (GLTALGGLYFMFLVEHVLTLI). Over 433–645 (KQFKDKKKKN…LKAGMTVKQA (213 aa)) the chain is Cytoplasmic. Residues 452-474 (VEIKKQLSKYESQLSTNEEKVDT) are a coiled coil. Residues S459 and S466 each carry the phosphoserine modification. The helical transmembrane segment at 646 to 666 (VLYNALSAMLAYLGMATGIFI) threads the bilayer. At 667 to 674 (GHYAENVS) the chain is on the extracellular side. N-linked (GlcNAc...) asparagine glycosylation occurs at N672. Residues 675 to 695 (MWIFALTAGLFMYVALVDMVP) form a helical membrane-spanning segment. Topologically, residues 696–712 (EMLHNDASDHGCSRWGY) are cytoplasmic. A helical transmembrane segment spans residues 713–733 (FFLQNAGMLLGFGIMLLISIF). Over 734-743 (EHKIVFRINF) the chain is Extracellular.

This sequence belongs to the ZIP transporter (TC 2.A.5) family. Interacts with SLC39A10; which triggers cells to undergo EMT and mitosis. Found in a complex with SLC39A6, SLC39A10 and with the 'Ser-727' phosphorylated form of STAT3 throughout mitosis. Found in a complex with SLC39A6, SLC39A10 and with NCAM1; this complex controls NCAM1 phosphorylation and integration into focal adhesion complexes during epithelial-to-mesenchymal transition (EMT). Found in a complex with SLC39A6, SLC39A10 and with GSK3B that controls NCAM1 phosphorylation. Cleaved on the N-terminus before locating to the plasma membrane. In terms of processing, N-glycosylated. Post-translationally, phosphorylated by ZAP70 in response to TCR stimulation leading to its activation.

It localises to the cell membrane. It is found in the cell projection. The protein localises to the lamellipodium membrane. The protein resides in the membrane raft. Its subcellular location is the apical cell membrane. It carries out the reaction Zn(2+)(in) = Zn(2+)(out). Functionally, zinc-influx transporter which plays a role in zinc homeostasis and in the induction of epithelial-to-mesenchymal transition (EMT). When associated with SLC39A10, the heterodimer formed by SLC39A10 and SLC39A6 mediates cellular zinc uptake to trigger cells to undergo epithelial- to-mesenchymal transition (EMT). The SLC39A10-SLC39A6 heterodimer also controls NCAM1 phosphorylation and its integration into focal adhesion complexes during EMT. Zinc influx inactivates GSK3B, enabling unphosphorylated SNAI1 in the nucleus to down-regulate adherence genes such as CDH1, causing loss of cell adherence. In addition, the SLC39A10-SLC39A6 heterodimer plays an essentiel role in initiating mitosis by importing zinc into cells to initiate a pathway resulting in the onset of mitosis. Participates in the T-cell receptor signaling regulation by mediating cellular zinc uptake into activated lymphocytes. Regulates the zinc influx necessary for proper meiotic progression to metaphase II (MII) that allows the oocyte-to-egg transition. This is Zinc transporter ZIP6 from Pongo abelii (Sumatran orangutan).